The chain runs to 303 residues: Pantothenate synthetase (303 aa).

Residues 1 to 21 (MIATGHGGAERRTTAGDGTAR) form a disordered region. 48–55 (MGALHDGH) contacts ATP. His-55 serves as the catalytic Proton donor. Residue Gln-79 coordinates (R)-pantoate. Gln-79 is a beta-alanine binding site. Residue 165–168 (GRKD) coordinates ATP. Gln-171 lines the (R)-pantoate pocket. An ATP-binding site is contributed by 202–205 (ASSR).

It belongs to the pantothenate synthetase family. Homodimer.

Its subcellular location is the cytoplasm. The catalysed reaction is (R)-pantoate + beta-alanine + ATP = (R)-pantothenate + AMP + diphosphate + H(+). It functions in the pathway cofactor biosynthesis; (R)-pantothenate biosynthesis; (R)-pantothenate from (R)-pantoate and beta-alanine: step 1/1. In terms of biological role, catalyzes the condensation of pantoate with beta-alanine in an ATP-dependent reaction via a pantoyl-adenylate intermediate. In Acidothermus cellulolyticus (strain ATCC 43068 / DSM 8971 / 11B), this protein is Pantothenate synthetase.